Reading from the N-terminus, the 282-residue chain is Malonyl-[acyl-carrier protein] O-methyltransferase 1 (282 aa).

The protein belongs to the methyltransferase superfamily.

The catalysed reaction is malonyl-[ACP] + S-adenosyl-L-methionine = malonyl-[ACP] methyl ester + S-adenosyl-L-homocysteine. Its pathway is cofactor biosynthesis; biotin biosynthesis. Its function is as follows. Converts the free carboxyl group of a malonyl-thioester to its methyl ester by transfer of a methyl group from S-adenosyl-L-methionine (SAM). It allows to synthesize pimeloyl-ACP via the fatty acid synthetic pathway. The protein is Malonyl-[acyl-carrier protein] O-methyltransferase 1 of Coxiella burnetii (strain RSA 493 / Nine Mile phase I).